Here is a 224-residue protein sequence, read N- to C-terminus: Dickkopf-related protein 4 (224 aa).

A signal peptide spans 1–18 (MVAAVLLGLSWLCSPLGA). The tract at residues 41–90 (CLSDTDCNTRKFCLQPRDEKPFCATCRGLRRRCQRDAMCCPGTLCVNDVC) is DKK-type Cys-1. Residues 109–139 (GTHAEGTTGHPVQENQPKRKPSIKKSQGRKG) form a disordered region. Residues 126 to 136 (KRKPSIKKSQG) show a composition bias toward basic residues. 5 cysteine pairs are disulfide-bonded: C145–C157, C151–C166, C156–C194, C176–C202, and C196–C218. The interval 145-218 (CLRTFDCGPG…NRQHARLRVC (74 aa)) is DKK-type Cys-2.

It belongs to the dickkopf family. Interacts with LRP5 and LRP6. Appears to be not glycosylated. Post-translationally, can be proteolytically processed by a furin-like protease. Expressed in cerebellum, T-cells, esophagus and lung.

The protein localises to the secreted. Antagonizes canonical Wnt signaling by inhibiting LRP5/6 interaction with Wnt and by forming a ternary complex with the transmembrane protein KREMEN that promotes internalization of LRP5/6. DKKs play an important role in vertebrate development, where they locally inhibit Wnt regulated processes such as antero-posterior axial patterning, limb development, somitogenesis and eye formation. In the adult, Dkks are implicated in bone formation and bone disease, cancer and Alzheimer disease. The polypeptide is Dickkopf-related protein 4 (DKK4) (Homo sapiens (Human)).